A 311-amino-acid polypeptide reads, in one-letter code: 4-hydroxyproline 2-epimerase (311 aa).

Catalysis depends on Cys89, which acts as the Proton acceptor. Substrate is bound by residues 90 to 91 (GH), His209, and Asp233. Cys237 (proton donor) is an active-site residue. A substrate-binding site is contributed by 238-239 (GT).

The protein belongs to the proline racemase family.

The catalysed reaction is trans-4-hydroxy-L-proline = cis-4-hydroxy-D-proline. Its function is as follows. Catalyzes the epimerization of trans-4-hydroxy-L-proline (t4LHyp) to cis-4-hydroxy-D-proline (c4DHyp). Is likely involved in a degradation pathway that converts t4LHyp to alpha-ketoglutarate. Displays no proline racemase activity. The sequence is that of 4-hydroxyproline 2-epimerase from Burkholderia ambifaria (strain ATCC BAA-244 / DSM 16087 / CCUG 44356 / LMG 19182 / AMMD) (Burkholderia cepacia (strain AMMD)).